Here is a 209-residue protein sequence, read N- to C-terminus: GTP cyclohydrolase 1 (209 aa).

Residues Cys-100, His-103, and Cys-171 each coordinate Zn(2+).

The protein belongs to the GTP cyclohydrolase I family. Toroid-shaped homodecamer, composed of two pentamers of five dimers.

The catalysed reaction is GTP + H2O = 7,8-dihydroneopterin 3'-triphosphate + formate + H(+). The protein operates within cofactor biosynthesis; 7,8-dihydroneopterin triphosphate biosynthesis; 7,8-dihydroneopterin triphosphate from GTP: step 1/1. In Ralstonia nicotianae (strain ATCC BAA-1114 / GMI1000) (Ralstonia solanacearum), this protein is GTP cyclohydrolase 1.